Consider the following 136-residue polypeptide: Phospholipase A2 (136 aa).

Ca(2+)-binding residues include Trp8, Gly10, and Gly12. 5 disulfides stabilise this stretch: Cys9-Cys31, Cys30-Cys70, Cys37-Cys63, Cys61-Cys95, and Cys105-Cys117. Asn16 carries an N-linked (GlcNAc...) asparagine glycan. His34 is an active-site residue. Asp35 contributes to the Ca(2+) binding site. Asp64 is a catalytic residue.

The protein belongs to the phospholipase A2 family. Requires Ca(2+) as cofactor. As to expression, expressed by the venom gland.

It is found in the secreted. The enzyme catalyses a 1,2-diacyl-sn-glycero-3-phosphocholine + H2O = a 1-acyl-sn-glycero-3-phosphocholine + a fatty acid + H(+). PLA2 catalyzes the calcium-dependent hydrolysis of the 2-acyl groups in 3-sn-phosphoglycerides. This Bombus terrestris (Buff-tailed bumblebee) protein is Phospholipase A2.